The following is a 321-amino-acid chain: Corticotropin-releasing factor-binding protein (321 aa).

Residues 1–21 (MTPASRPDWCLILLFLAVLRG) form the signal peptide. Disulfide bonds link Cys-59–Cys-80, Cys-103–Cys-140, Cys-182–Cys-204, Cys-237–Cys-264, and Cys-277–Cys-317. Asn-203 carries N-linked (GlcNAc...) asparagine glycosylation.

This sequence belongs to the CRF-binding protein family.

The protein resides in the secreted. Its function is as follows. Binds CRF and inactivates it. May prevent inappropriate pituitary-adrenal stimulation in pregnancy. This Xenopus laevis (African clawed frog) protein is Corticotropin-releasing factor-binding protein (crhbp).